A 665-amino-acid chain; its full sequence is Transketolase (665 aa).

His-26 lines the substrate pocket. Thiamine diphosphate-binding positions include His-66 and Gly-114–Leu-116. Asp-155 contributes to the Mg(2+) binding site. Thiamine diphosphate contacts are provided by Gly-156 and Asn-185. Mg(2+) is bound by residues Asn-185 and Ile-187. Residues His-261, Arg-358, and Ser-385 each coordinate substrate. Thiamine diphosphate is bound at residue His-261. Residue Glu-411 is the Proton donor of the active site. A thiamine diphosphate-binding site is contributed by Phe-437. Substrate-binding residues include His-461, Asp-469, and Arg-520.

This sequence belongs to the transketolase family. As to quaternary structure, homodimer. Mg(2+) serves as cofactor. Requires Ca(2+) as cofactor. Mn(2+) is required as a cofactor. It depends on Co(2+) as a cofactor. The cofactor is thiamine diphosphate.

The catalysed reaction is D-sedoheptulose 7-phosphate + D-glyceraldehyde 3-phosphate = aldehydo-D-ribose 5-phosphate + D-xylulose 5-phosphate. In terms of biological role, catalyzes the transfer of a two-carbon ketol group from a ketose donor to an aldose acceptor, via a covalent intermediate with the cofactor thiamine pyrophosphate. In Buchnera aphidicola subsp. Schizaphis graminum (strain Sg), this protein is Transketolase (tkt).